Consider the following 878-residue polypeptide: Leucine--tRNA ligase (878 aa).

Positions M1 to S14 are enriched in low complexity. The disordered stretch occupies residues M1 to I23. The short motif at P58–H68 is the 'HIGH' region element. The 'KMSKS' region signature appears at K632–S636. ATP is bound at residue K635.

Belongs to the class-I aminoacyl-tRNA synthetase family.

Its subcellular location is the cytoplasm. It carries out the reaction tRNA(Leu) + L-leucine + ATP = L-leucyl-tRNA(Leu) + AMP + diphosphate. This is Leucine--tRNA ligase from Synechococcus sp. (strain WH7803).